Reading from the N-terminus, the 94-residue chain is ESAT-6-like protein EsxL (94 aa).

The protein belongs to the WXG100 family. ESAT-6 subfamily. In terms of assembly, strongly interacts with EsxK to form a heterodimeric complex under reducing conditions.

Its subcellular location is the secreted. This is ESAT-6-like protein EsxL from Mycobacterium bovis (strain ATCC BAA-935 / AF2122/97).